Here is a 245-residue protein sequence, read N- to C-terminus: Phosphoribosylaminoimidazole-succinocarboxamide synthase (245 aa).

The protein belongs to the SAICAR synthetase family.

It catalyses the reaction 5-amino-1-(5-phospho-D-ribosyl)imidazole-4-carboxylate + L-aspartate + ATP = (2S)-2-[5-amino-1-(5-phospho-beta-D-ribosyl)imidazole-4-carboxamido]succinate + ADP + phosphate + 2 H(+). It participates in purine metabolism; IMP biosynthesis via de novo pathway; 5-amino-1-(5-phospho-D-ribosyl)imidazole-4-carboxamide from 5-amino-1-(5-phospho-D-ribosyl)imidazole-4-carboxylate: step 1/2. This is Phosphoribosylaminoimidazole-succinocarboxamide synthase from Nostoc punctiforme (strain ATCC 29133 / PCC 73102).